The following is a 259-amino-acid chain: MAIHLVIIDALNLIRRVHSAQPDPTDIANTIQNTRRTLQRIISESHPTHIVAVFDHLGSDRGWRAEILPEYKQGRKPMPEPLLNGLEKIQEAWWQLGIDSLLSEGDEADDLVATLACKVAQHGEKVTIISTDKGYCQLLSPTLQIRDYFQHRWLDQPFIEQEFGVKPQQLSDYWGLTGISSSQVTGIPGIGPKAAKEILSQFDDIEQAFLSPDLPKKYRTKFDQHIELARRCKRVSALKTDIELGFNLQDLRFTANEAR.

Residue Asp-109 coordinates Mg(2+). In terms of domain architecture, 5'-3' exonuclease spans 165-255; the sequence is VKPQQLSDYW…FNLQDLRFTA (91 aa). K(+)-binding residues include Leu-176, Ile-187, and Ile-190. Residues 189-194 are interaction with DNA; the sequence is GIGPKA.

This sequence belongs to the Xni family. Mg(2+) serves as cofactor. Requires K(+) as cofactor.

Functionally, has flap endonuclease activity. During DNA replication, flap endonucleases cleave the 5'-overhanging flap structure that is generated by displacement synthesis when DNA polymerase encounters the 5'-end of a downstream Okazaki fragment. This Vibrio vulnificus (strain CMCP6) protein is Flap endonuclease Xni.